The chain runs to 128 residues: Ribosome-binding factor A (128 aa).

This sequence belongs to the RbfA family. As to quaternary structure, monomer. Binds 30S ribosomal subunits, but not 50S ribosomal subunits or 70S ribosomes.

It is found in the cytoplasm. One of several proteins that assist in the late maturation steps of the functional core of the 30S ribosomal subunit. Associates with free 30S ribosomal subunits (but not with 30S subunits that are part of 70S ribosomes or polysomes). Required for efficient processing of 16S rRNA. May interact with the 5'-terminal helix region of 16S rRNA. This is Ribosome-binding factor A from Pseudomonas paraeruginosa (strain DSM 24068 / PA7) (Pseudomonas aeruginosa (strain PA7)).